The following is a 467-amino-acid chain: UDP-N-acetylmuramate--L-alanine ligase (467 aa).

112–118 (GTHGKTT) is an ATP binding site.

Belongs to the MurCDEF family.

The protein resides in the cytoplasm. It catalyses the reaction UDP-N-acetyl-alpha-D-muramate + L-alanine + ATP = UDP-N-acetyl-alpha-D-muramoyl-L-alanine + ADP + phosphate + H(+). It participates in cell wall biogenesis; peptidoglycan biosynthesis. Cell wall formation. This Paraburkholderia phytofirmans (strain DSM 17436 / LMG 22146 / PsJN) (Burkholderia phytofirmans) protein is UDP-N-acetylmuramate--L-alanine ligase.